The following is a 432-amino-acid chain: Adenylosuccinate lyase (432 aa).

Residues 4 to 5 (RY), 67 to 69 (RHD), and 93 to 94 (TS) each bind N(6)-(1,2-dicarboxyethyl)-AMP. His-141 serves as the catalytic Proton donor/acceptor. A N(6)-(1,2-dicarboxyethyl)-AMP-binding site is contributed by Gln-212. Ser-262 (proton donor/acceptor) is an active-site residue. Residues Ser-263, 268–270 (KRN), Asn-276, and 307–311 (SAERI) each bind N(6)-(1,2-dicarboxyethyl)-AMP.

It belongs to the lyase 1 family. Adenylosuccinate lyase subfamily. As to quaternary structure, homodimer and homotetramer. Residues from neighboring subunits contribute catalytic and substrate-binding residues to each active site.

The enzyme catalyses N(6)-(1,2-dicarboxyethyl)-AMP = fumarate + AMP. It catalyses the reaction (2S)-2-[5-amino-1-(5-phospho-beta-D-ribosyl)imidazole-4-carboxamido]succinate = 5-amino-1-(5-phospho-beta-D-ribosyl)imidazole-4-carboxamide + fumarate. It functions in the pathway purine metabolism; AMP biosynthesis via de novo pathway; AMP from IMP: step 2/2. The protein operates within purine metabolism; IMP biosynthesis via de novo pathway; 5-amino-1-(5-phospho-D-ribosyl)imidazole-4-carboxamide from 5-amino-1-(5-phospho-D-ribosyl)imidazole-4-carboxylate: step 2/2. In terms of biological role, catalyzes two reactions in de novo purine nucleotide biosynthesis. Catalyzes the breakdown of 5-aminoimidazole- (N-succinylocarboxamide) ribotide (SAICAR or 2-[5-amino-1-(5-phospho-beta-D-ribosyl)imidazole-4-carboxamido]succinate) to 5-aminoimidazole-4-carboxamide ribotide (AICAR or 5-amino-1-(5-phospho-beta-D-ribosyl)imidazole-4-carboxamide) and fumarate, and of adenylosuccinate (ADS or N(6)-(1,2-dicarboxyethyl)-AMP) to adenosine monophosphate (AMP) and fumarate. The protein is Adenylosuccinate lyase (purB) of Streptococcus mutans serotype c (strain ATCC 700610 / UA159).